An 882-amino-acid polypeptide reads, in one-letter code: Translation initiation factor IF-2 (882 aa).

The segment at 38–294 (IEDSQASWVK…KSKHKRKKEN (257 aa)) is disordered. 3 stretches are compositionally biased toward basic and acidic residues: residues 66-76 (TRDEAVKKHSG), 109-128 (GRREFSENREQSRKGEERHS), and 207-219 (PDNKGSRPSDAKR). Basic residues predominate over residues 282–292 (PGRKSKHKRKK). The tr-type G domain occupies 383–556 (ARPPVVTIMG…EMNEIRANPD (174 aa)). Residues 392 to 399 (GHVDHGKT) form a G1 region. 392–399 (GHVDHGKT) is a binding site for GTP. The interval 417 to 421 (GITQH) is G2. The G3 stretch occupies residues 438–441 (DTPG). Residues 438–442 (DTPGH) and 492–495 (NKID) each bind GTP. A G4 region spans residues 492-495 (NKID). Positions 528 to 530 (SAK) are G5.

It belongs to the TRAFAC class translation factor GTPase superfamily. Classic translation factor GTPase family. IF-2 subfamily.

It localises to the cytoplasm. Its function is as follows. One of the essential components for the initiation of protein synthesis. Protects formylmethionyl-tRNA from spontaneous hydrolysis and promotes its binding to the 30S ribosomal subunits. Also involved in the hydrolysis of GTP during the formation of the 70S ribosomal complex. The polypeptide is Translation initiation factor IF-2 (Syntrophomonas wolfei subsp. wolfei (strain DSM 2245B / Goettingen)).